The sequence spans 474 residues: Alginate biosynthesis protein AlgX (474 aa).

Residues 1–26 (MKTRTSRLFRLSALAAGLCLAQAALA) form the signal peptide. Residues 27–347 (ADPGAAPSYQ…QAMPLVDNGC (321 aa)) are SGNH hydrolase-like domain. The cysteines at positions 44 and 229 are disulfide-linked. Residue Asp-174 is part of the active site. Catalysis depends on His-176, which acts as the Proton acceptor. The active-site Nucleophile is the Ser-269. A disulfide bond links Cys-347 and Cys-460. The tract at residues 348–474 (SGRKTVLSRK…AKASQSVAGR (127 aa)) is CBM domain.

It belongs to the AlgX family. In terms of assembly, monomer. Interacts with AlgK and MucD.

It localises to the periplasm. Its pathway is glycan biosynthesis; alginate biosynthesis. In terms of biological role, plays two roles in the biosynthesis of the exopolysaccharide alginate: protects alginate from degradation as the polymer traverses the periplasm, and also plays a role in its O-acetylation. Acetylation of alginate causes the cells in the biofilm to adhere better to lung epithelium, form microcolonies, and resist the effects of the host immune system and/or antibiotics. Displays a low acetylesterase activity in vitro using a pseudosubstrate, 3-carboxyumbelliferyl acetate. Probably has acetyltransferase activity in vivo. The polypeptide is Alginate biosynthesis protein AlgX (algX) (Pseudomonas aeruginosa (strain ATCC 15692 / DSM 22644 / CIP 104116 / JCM 14847 / LMG 12228 / 1C / PRS 101 / PAO1)).